A 489-amino-acid polypeptide reads, in one-letter code: MIPPHEFSAERVVFDALGVALSALPDDTPIAIAYSGGLDSTVLLHAAARIAGAGRCIALHVHHGLSANADAWLAHCAETAQALGARFDAARVDVPRASGQGIEASARDARYRALETMCARYGARTLWLAQHADDQAETVLLQLLRGAGIAGLAAMAPQYRPALADVVRMRPLLHLLRAQLERYAQQHALRWIDDESNTDTRYARNALRVDVLPALAPHFPGFRDALARTAQHAAAAQRLLDDLAAIDLRAVARADVRVLSRDALVALDDERGANLLRYWMRSLGLPGASAARLAEMVKQLRAARDAHALRVDHAGWRLRLYRDDVQWEAGDGAASEAARADVADDDAADARDDRADASAAARLPACALAWRGHEVWRLPGWRGSFVFSPVAAHEHDAVPEALLSSAALRACARAGGERMRTRQGGPGRTLKNLFQERGVPAWQRDVPLLYVGERLLFVPRIGVNRATHDGADAPGGWRRIEWRPDMLIA.

35-40 (SGGLDS) is an ATP binding site.

The protein belongs to the tRNA(Ile)-lysidine synthase family.

The protein resides in the cytoplasm. It carries out the reaction cytidine(34) in tRNA(Ile2) + L-lysine + ATP = lysidine(34) in tRNA(Ile2) + AMP + diphosphate + H(+). Its function is as follows. Ligates lysine onto the cytidine present at position 34 of the AUA codon-specific tRNA(Ile) that contains the anticodon CAU, in an ATP-dependent manner. Cytidine is converted to lysidine, thus changing the amino acid specificity of the tRNA from methionine to isoleucine. This is tRNA(Ile)-lysidine synthase from Burkholderia pseudomallei (strain K96243).